The primary structure comprises 557 residues: Protein Red (557 aa).

A disordered region spans residues 1 to 90 (MPERDSEPFS…YAKLRQQEIE (90 aa)). Basic and acidic residues predominate over residues 16–25 (DGHDVDDPHS). Over residues 42 to 53 (TPRAAPTSAPPS) the composition is skewed to low complexity. Lysine 98 and lysine 137 each carry N6-acetyllysine. Lysine 151 is covalently cross-linked (Glycyl lysine isopeptide (Lys-Gly) (interchain with G-Cter in SUMO2)). The tract at residues 181 to 205 (KEKEEEELMEKPQKETKKDEDPENK) is disordered. Residue serine 287 is modified to Phosphoserine. A compositionally biased stretch (basic residues) spans 294–303 (RNKKLKKKDK). Residues 294–402 (RNKKLKKKDK…PMDVDKGPGS (109 aa)) form a disordered region. The segment covering 304–313 (GKLEEKKPPE) has biased composition (basic and acidic residues). Glycyl lysine isopeptide (Lys-Gly) (interchain with G-Cter in SUMO2) cross-links involve residues lysine 310 and lysine 331. Over residues 332 to 398 (TPRDKERERY…VDDEPMDVDK (67 aa)) the composition is skewed to basic and acidic residues. A run of 17 repeats spans residues 342-343 (RE), 344-345 (RE), 346-347 (RD), 348-349 (RE), 350-351 (RD), 352-353 (RD), 354-355 (RE), 356-357 (RD), 358-359 (RE), 360-361 (RD), 362-363 (RE), 364-365 (RE), 366-367 (RE), 368-369 (RD), 370-371 (RE), 372-373 (RE), and 374-375 (RE). The segment at 342–375 (RERERDRERDRDRERDRERDRERERERDRERERE) is 17 X 2 AA tandem repeats of R-[ED]. Glycyl lysine isopeptide (Lys-Gly) (interchain with G-Cter in SUMO2) cross-links involve residues lysine 386, lysine 388, lysine 404, and lysine 408. 2 positions are modified to phosphoserine: serine 417 and serine 460. Threonine 485 bears the Phosphothreonine mark. Residues lysine 496, lysine 501, and lysine 509 each participate in a glycyl lysine isopeptide (Lys-Gly) (interchain with G-Cter in SUMO2) cross-link. Serine 536 is subject to Phosphoserine. Residues lysine 541, lysine 543, lysine 544, and lysine 553 each participate in a glycyl lysine isopeptide (Lys-Gly) (interchain with G-Cter in SUMO2) cross-link.

It belongs to the RED family. As to quaternary structure, component of the spliceosome B complex. Interacts with SMU1. Interacts with MAD1L1. May interact with DHX15.

Its subcellular location is the nucleus. The protein resides in the nucleoplasm. It localises to the chromosome. The protein localises to the cytoplasm. It is found in the cytoskeleton. Its subcellular location is the spindle pole. Its function is as follows. Involved in pre-mRNA splicing as a component of the spliceosome. Auxiliary spliceosomal protein that regulates selection of alternative splice sites in a small set of target pre-mRNA species. Required for normal mitotic cell cycle progression. Recruits MAD1L1 and MAD2L1 to kinetochores, and is required to trigger the spindle assembly checkpoint. Required for normal accumulation of SMU1. In Rattus norvegicus (Rat), this protein is Protein Red (Ik).